The following is a 232-amino-acid chain: DOA4-independent degradation protein 4 (232 aa).

Positions 14–97 (PQERLKKNQR…AISLRIQAVR (84 aa)) form a coiled coil. The segment at 183 to 232 (LQSTPQNLVSNAPIAETAMGIPEPIGAGSEFHGNPDDDLQARLNTLKKQT) is interaction with VPS4. Positions 203 to 232 (IPEPIGAGSEFHGNPDDDLQARLNTLKKQT) are disordered. Residues 219–229 (DDLQARLNTLK) carry the MIT-interacting motif motif.

The protein belongs to the SNF7 family. As to quaternary structure, core component of the ESCRT-III complex (endosomal sorting required for transport complex III). ESCRT-III appears to be sequentially assembled as a flat lattice on the endosome membrane and forms a transient 450 kDa complex that contains DID4, oligomerized SNF7, VPS20 and VPS24. SNF7 oligomerization into a membrane-associated filament is nucleated by association of SNF7 with VPS20; the process is terminated through association of VPS24, possibly by capping the SNF7 filament. VPS24 subsequently associates with DID4/VPS2.

The protein localises to the cytoplasm. It localises to the endosome membrane. Required for the sorting and concentration of proteins resulting in the entry of these proteins into the invaginating vesicles of the multivesicular body (MVB). Acts a component of the ESCRT-III complex, which appears to be critical for late steps in MVB sorting, such as membrane invagination and final cargo sorting and recruitment of late-acting components of the sorting machinery. The MVB pathway requires the sequential function of ESCRT-O, -I,-II and -III complex assemblies. Can directly stimulate VPS4 ATPase activity. The DID4/VPS2-VPS24 subcomplex is required for the VPS4-dependent dissociation of ESCRT-III. The protein is DOA4-independent degradation protein 4 (DID4) of Saccharomyces cerevisiae (strain ATCC 204508 / S288c) (Baker's yeast).